The chain runs to 349 residues: UDP-N-acetylenolpyruvoylglucosamine reductase (349 aa).

The 172-residue stretch at 26–197 folds into the FAD-binding PCMH-type domain; sequence FDARARVAAR…VAVTFRLPKA (172 aa). Residue Arg173 is part of the active site. The active-site Proton donor is Ser249. Residue Glu345 is part of the active site.

The protein belongs to the MurB family. The cofactor is FAD.

Its subcellular location is the cytoplasm. The enzyme catalyses UDP-N-acetyl-alpha-D-muramate + NADP(+) = UDP-N-acetyl-3-O-(1-carboxyvinyl)-alpha-D-glucosamine + NADPH + H(+). It participates in cell wall biogenesis; peptidoglycan biosynthesis. Cell wall formation. This Burkholderia pseudomallei (strain K96243) protein is UDP-N-acetylenolpyruvoylglucosamine reductase.